Here is a 141-residue protein sequence, read N- to C-terminus: Large ribosomal subunit protein uL11 (141 aa).

It belongs to the universal ribosomal protein uL11 family. In terms of assembly, part of the ribosomal stalk of the 50S ribosomal subunit. Interacts with L10 and the large rRNA to form the base of the stalk. L10 forms an elongated spine to which L12 dimers bind in a sequential fashion forming a multimeric L10(L12)X complex. In terms of processing, one or more lysine residues are methylated.

Functionally, forms part of the ribosomal stalk which helps the ribosome interact with GTP-bound translation factors. The sequence is that of Large ribosomal subunit protein uL11 from Chloroherpeton thalassium (strain ATCC 35110 / GB-78).